Reading from the N-terminus, the 103-residue chain is Ribonuclease VapC14 (103 aa).

Positions 3-74 constitute a PINc domain; it reads YVLDTNVVSA…WFDDKVLRIF (72 aa). Asp6 contacts Mg(2+).

The protein belongs to the PINc/VapC protein family. Requires Mg(2+) as cofactor.

In terms of biological role, toxic component of a type II toxin-antitoxin (TA) system. An RNase. The cognate antitoxin is VapB14. The protein is Ribonuclease VapC14 (vapC14) of Mycobacterium tuberculosis (strain CDC 1551 / Oshkosh).